Reading from the N-terminus, the 398-residue chain is S-adenosylmethionine synthase (398 aa).

136 to 141 (GTGSSD) serves as a coordination point for ATP.

This sequence belongs to the AdoMet synthase 2 family. The cofactor is Mg(2+).

The catalysed reaction is L-methionine + ATP + H2O = S-adenosyl-L-methionine + phosphate + diphosphate. It participates in amino-acid biosynthesis; S-adenosyl-L-methionine biosynthesis; S-adenosyl-L-methionine from L-methionine: step 1/1. In terms of biological role, catalyzes the formation of S-adenosylmethionine from methionine and ATP. The polypeptide is S-adenosylmethionine synthase (Methanosarcina mazei (strain ATCC BAA-159 / DSM 3647 / Goe1 / Go1 / JCM 11833 / OCM 88) (Methanosarcina frisia)).